We begin with the raw amino-acid sequence, 266 residues long: MTNIVVLIKQVPDTWSERKLTDGDFTLDREAADAVLDEINERAVEEALQIREKEAVDGIKGSVTVLTAGPERATEAIRKALSMGADKAVHLKDDGMHGSDVIQTGWALARALGTIEGTELVIAGNESTDGVGGVVPAIIAEYLGLPQLTHLRTISVEGGKITGERETDEGVFTLEAVLPAVVSVNEKINEPRFPSFKGIMAAKKKEVTVLTLAEIGVEVDEVGLANAGSKVLVSTPKPAKTAGEKITDEGDGGNQIVQYLVAQKII.

It belongs to the ETF beta-subunit/FixA family. As to quaternary structure, heterodimer of an alpha and a beta subunit. The cofactor is FAD. AMP serves as cofactor.

The electron transfer flavoprotein serves as a specific electron acceptor for other dehydrogenases. It transfers the electrons to the main respiratory chain via ETF-ubiquinone oxidoreductase (ETF dehydrogenase). This Mycobacterium leprae (strain TN) protein is Electron transfer flavoprotein subunit beta (etfB).